A 99-amino-acid polypeptide reads, in one-letter code: MTIYSYLLLLCMVMFVTFFTQKNNILSLMVVLESLMLITLSSVAVSLNYMAGSSMVMILLLCFAAAEAALSLSLLVCFIQVNSSCEMLAMNKILFAKKS.

3 helical membrane-spanning segments follow: residues Met1–Gln21, Ile25–Val45, and Val56–Val76.

The protein belongs to the complex I subunit 4L family.

Its subcellular location is the mitochondrion membrane. The catalysed reaction is a ubiquinone + NADH + 5 H(+)(in) = a ubiquinol + NAD(+) + 4 H(+)(out). In terms of biological role, core subunit of the mitochondrial membrane respiratory chain NADH dehydrogenase (Complex I) that is believed to belong to the minimal assembly required for catalysis. Complex I functions in the transfer of electrons from NADH to the respiratory chain. The immediate electron acceptor for the enzyme is believed to be ubiquinone. The chain is NADH-ubiquinone oxidoreductase chain 4L (ND4L) from Albinaria caerulea (Land snail).